The following is a 319-amino-acid chain: Cobalamin biosynthesis protein CbiB (319 aa).

A run of 4 helical transmembrane segments spans residues 56–76 (VMWV…LALA), 82–102 (WFGW…RSLA), 153–173 (VDGI…LAMA), and 296–316 (LMWV…CGLS).

It belongs to the CobD/CbiB family.

The protein resides in the cell membrane. The protein operates within cofactor biosynthesis; adenosylcobalamin biosynthesis. In terms of biological role, converts cobyric acid to cobinamide by the addition of aminopropanol on the F carboxylic group. However, the true cosubstrate could be (R)-1-amino-2-propanol O-2-phosphate, leading to cobinamide phosphate. This is Cobalamin biosynthesis protein CbiB from Salmonella paratyphi A (strain ATCC 9150 / SARB42).